The sequence spans 700 residues: Methionine--tRNA ligase (700 aa).

A 'HIGH' region motif is present at residues 13-23 (PYANGDIHLGH). Residues cysteine 144, cysteine 147, cysteine 157, and cysteine 160 each coordinate Zn(2+). A 'KMSKS' region motif is present at residues 341 to 345 (KMSKS). Lysine 344 provides a ligand contact to ATP. One can recognise a tRNA-binding domain in the interval 598 to 700 (DFAKVEMKVA…DNCVIGDLLA (103 aa)).

It belongs to the class-I aminoacyl-tRNA synthetase family. MetG type 1 subfamily. As to quaternary structure, homodimer. It depends on Zn(2+) as a cofactor.

It localises to the cytoplasm. It catalyses the reaction tRNA(Met) + L-methionine + ATP = L-methionyl-tRNA(Met) + AMP + diphosphate. Is required not only for elongation of protein synthesis but also for the initiation of all mRNA translation through initiator tRNA(fMet) aminoacylation. The chain is Methionine--tRNA ligase from Psychrobacter arcticus (strain DSM 17307 / VKM B-2377 / 273-4).